A 288-amino-acid chain; its full sequence is ATP synthase gamma chain (288 aa).

It belongs to the ATPase gamma chain family. As to quaternary structure, F-type ATPases have 2 components, CF(1) - the catalytic core - and CF(0) - the membrane proton channel. CF(1) has five subunits: alpha(3), beta(3), gamma(1), delta(1), epsilon(1). CF(0) has three main subunits: a, b and c.

The protein localises to the cell inner membrane. Its function is as follows. Produces ATP from ADP in the presence of a proton gradient across the membrane. The gamma chain is believed to be important in regulating ATPase activity and the flow of protons through the CF(0) complex. The chain is ATP synthase gamma chain from Rickettsia bellii (strain RML369-C).